Consider the following 72-residue polypeptide: Translation initiation factor IF-1 (72 aa).

One can recognise an S1-like domain in the interval 1 to 72 (MAKEDNFELE…SKGRITYRAR (72 aa)).

Belongs to the IF-1 family. In terms of assembly, component of the 30S ribosomal translation pre-initiation complex which assembles on the 30S ribosome in the order IF-2 and IF-3, IF-1 and N-formylmethionyl-tRNA(fMet); mRNA recruitment can occur at any time during PIC assembly.

The protein localises to the cytoplasm. Its function is as follows. One of the essential components for the initiation of protein synthesis. Stabilizes the binding of IF-2 and IF-3 on the 30S subunit to which N-formylmethionyl-tRNA(fMet) subsequently binds. Helps modulate mRNA selection, yielding the 30S pre-initiation complex (PIC). Upon addition of the 50S ribosomal subunit IF-1, IF-2 and IF-3 are released leaving the mature 70S translation initiation complex. The protein is Translation initiation factor IF-1 of Saccharophagus degradans (strain 2-40 / ATCC 43961 / DSM 17024).